Reading from the N-terminus, the 305-residue chain is GS homeobox 2 (305 aa).

Disordered stretches follow at residues 115 to 151 (DAQFCPRVSHAHHHHHPPQHHHHHHQPQQPGSAAAAA) and 259 to 305 (KKEG…ISPL). Positions 123–140 (SHAHHHHHPPQHHHHHHQ) are enriched in basic residues. Over residues 141–151 (PQQPGSAAAAA) the composition is skewed to low complexity. Residues 203–262 (GKRMRTAFTSTQLLELEREFSSNMYLSRLRRIEIATYLNLSEKQVKIWFQNRRVKHKKEG) constitute a DNA-binding region (homeobox).

Belongs to the Antp homeobox family.

It localises to the nucleus. Functionally, transcription factor that binds 5'-CNAATTAG-3' DNA sequence and regulates the expression of numerous genes including genes important for brain development. During telencephalic development, causes ventralization of pallial progenitors and, depending on the developmental stage, specifies different neuronal fates. At early stages, necessary and sufficient to correctly specify the ventral lateral ganglionic eminence (LGE) and its major derivatives, the striatal projection neurons. At later stages, may specify LGE progenitors toward dorsal LGE fates, including olfactory bulb interneurons. This is GS homeobox 2 (Gsx2) from Mus musculus (Mouse).